The chain runs to 240 residues: Intestine-specific homeobox (240 aa).

Residues 36–82 (PTERRSLPRPQSICKEDSRQTTIPGSKLERPPQDQPQEEKKNKRRVR) form a disordered region. The segment covering 62–76 (KLERPPQDQPQEEKK) has biased composition (basic and acidic residues). Residues 78–137 (KRRVRTTFTTEQLQELEKLFHFTHYPDIHVRSQLASRINLPEARVQIWFQNQRAKWRKQE) constitute a DNA-binding region (homeobox).

In terms of tissue distribution, expressed in intestinal epithelial cells from the duodenum to the proximal colon.

Its subcellular location is the nucleus. In terms of biological role, transcription factor that regulates gene expression in intestine. May participate in vitamin A metabolism most likely by regulating BCO1 expression in the intestine. The protein is Intestine-specific homeobox (Isx) of Mus musculus (Mouse).